The chain runs to 270 residues: tRNA pseudouridine synthase A (270 aa).

Residue D60 is the Nucleophile of the active site. The tract at residues 107-111 is RNA binding; it reads FHARF. Position 118 (Y118) interacts with substrate. An interaction with tRNA region spans residues 168-172; sequence QCQSR.

Belongs to the tRNA pseudouridine synthase TruA family. Homodimer.

It catalyses the reaction uridine(38/39/40) in tRNA = pseudouridine(38/39/40) in tRNA. Formation of pseudouridine at positions 38, 39 and 40 in the anticodon stem and loop of transfer RNAs. In Escherichia fergusonii (strain ATCC 35469 / DSM 13698 / CCUG 18766 / IAM 14443 / JCM 21226 / LMG 7866 / NBRC 102419 / NCTC 12128 / CDC 0568-73), this protein is tRNA pseudouridine synthase A.